The chain runs to 462 residues: Probable acid phosphatase SPBC4.06 (462 aa).

Histidine 35 (nucleophile) is an active-site residue. Aspartate 330 serves as the catalytic Proton donor.

This sequence belongs to the histidine acid phosphatase family.

Its subcellular location is the mitochondrion. It carries out the reaction a phosphate monoester + H2O = an alcohol + phosphate. The sequence is that of Probable acid phosphatase SPBC4.06 from Schizosaccharomyces pombe (strain 972 / ATCC 24843) (Fission yeast).